The following is a 1414-amino-acid chain: Phenyloxazoline synthase MbtB (1414 aa).

The region spanning 5–78 (TACSEIIRAE…AWSQLVSAGT (74 aa)) is the Carrier 1 domain. At S39 the chain carries O-(pantetheine 4'-phosphoryl)serine. The tract at residues 96-394 (EGEPFPLAPM…SSLLLDVDLT (299 aa)) is condensation/cyclization. The tract at residues 579–975 (SYAQLRDQAS…RLPGVHAAAA (397 aa)) is adenylation. One can recognise a Carrier 2 domain in the interval 1057–1135 (APRTVLQRAL…ALAQLLTGRE (79 aa)). S1094 carries the O-(pantetheine 4'-phosphoryl)serine modification. The thioesterase stretch occupies residues 1188–1413 (GAVLVFPHAG…AVARMVSADV (226 aa)).

It belongs to the ATP-dependent AMP-binding enzyme family. MbtB subfamily. The cofactor is pantetheine 4'-phosphate. In terms of processing, 4'-phosphopantetheine is transferred from CoA to a specific serine in each of the two carrier protein domains, leading to their activation from apo to holo forms.

It functions in the pathway siderophore biosynthesis; mycobactin biosynthesis. In terms of biological role, involved in the initial steps of the mycobactin biosynthetic pathway. Putatively couples activated salicylic acid with serine or threonine and cyclizes this precursor to the hydroxyphenyloxazoline ring system present in this class of siderophores. Essential for growth in macrophages. The polypeptide is Phenyloxazoline synthase MbtB (mbtB) (Mycobacterium tuberculosis (strain ATCC 25618 / H37Rv)).